We begin with the raw amino-acid sequence, 1007 residues long: Protocadherin alpha-C2 (1007 aa).

Residues 1–42 form the signal peptide; that stretch reads MEQAGTRPAATEHPRLRRPMPWLLLLPLLLLLLLLLPGPAAS. 5 consecutive Cadherin domains span residues 43-148, 149-257, 258-365, 374-469, and 470-579; these read QLRY…SPRF, PRPN…SPAF, DQST…APEV, VPEN…PPSF, and LEDS…APHI. Over 43–708 the chain is Extracellular; that stretch reads QLRYSVPEEQ…RTYSEITLYL (666 aa). N-linked (GlcNAc...) asparagine glycosylation is found at N280 and N436. N586 and N657 each carry an N-linked (GlcNAc...) asparagine glycan. In terms of domain architecture, Cadherin 6 spans 594–691; it reads VPRTAPAGYL…DRVSKILPDT (98 aa). A helical transmembrane segment spans residues 709–729; the sequence is IIALSTVSFIFLLTIIILSII. Topologically, residues 730–1007 are cytoplasmic; the sequence is KCYRYTAYGT…GNSTTDNSDQ (278 aa). PXXP repeat units lie at residues 856-859, 889-892, 930-933, and 948-951; these read PRQP, PGGP, PGNP, and PGSP. The segment at 856–951 is 4 X 4 AA repeats of P-X-X-P; sequence PRQPNPDWRY…PDKFIIPGSP (96 aa). The tract at residues 885–1007 is disordered; sequence LRAGPGGPDQ…GNSTTDNSDQ (123 aa). The segment covering 966-980 has biased composition (basic and acidic residues); it reads DKSDFITFGKKEETK.

The protein localises to the cell membrane. In terms of biological role, potential calcium-dependent cell-adhesion protein. May be involved in the establishment and maintenance of specific neuronal connections in the brain. This chain is Protocadherin alpha-C2 (PCDHAC2), found in Homo sapiens (Human).